Consider the following 598-residue polypeptide: Transcription factor cpaR (598 aa).

The zn(2)-C6 fungal-type DNA-binding region spans 22 to 51 (CNGCRERKRRCVRRKRELPCLSCQAENRPC).

Its subcellular location is the nucleus. In terms of biological role, transcription factor; part of the gene cluster that mediates the biosynthesis of the fungal neurotoxin cyclopiazonic acid (CPA), a nanomolar inhibitor of Ca(2+)-ATPase with a unique pentacyclic indole tetramic acid scaffold. The polypeptide is Transcription factor cpaR (Aspergillus oryzae (Yellow koji mold)).